The following is a 670-amino-acid chain: Solute carrier organic anion transporter family member 1A1 (670 aa).

The Cytoplasmic portion of the chain corresponds to 1 to 20 (MEETEKKIATQEGRLFSKMK). Residues 21–40 (VFLLSLTCACLTKSLSGVYM) form a helical membrane-spanning segment. Topologically, residues 41–59 (NSMLTQIERQFDISTSVAG) are extracellular. Residues 60-80 (LINGSFEIGNLFFIVFVSYFG) traverse the membrane as a helical segment. Residues 81–86 (TKLHRP) lie on the Cytoplasmic side of the membrane. The helical transmembrane segment at 87–111 (VVIGIGCVIMGLGCLLMSLPHFFMG) threads the bilayer. Residues 112-155 (RYEYETTISPTGNLSSNSFLCMENRTQTLKPTQDPAECVKEMKS) lie on the Extracellular side of the membrane. 2 N-linked (GlcNAc...) asparagine glycosylation sites follow: asparagine 124 and asparagine 135. Residues 156-184 (LMWICVMVGNIIRGIGETPIVPLGISYIE) form a helical membrane-spanning segment. The Cytoplasmic portion of the chain corresponds to 185-203 (DFAKSENSPLYIGILEMGK). The chain crosses the membrane as a helical span at residues 204–224 (VAGPIFGLLLGSYCAQIYVDI). Topologically, residues 225–242 (GSVNTDDLTITPSDTRWV) are extracellular. A helical transmembrane segment spans residues 243 to 267 (GAWWIGFLVCAGVNILTSIPFFFLP). The Cytoplasmic portion of the chain corresponds to 268–311 (KALPKKGQQENVAVTKDGKVEKYGGQAREENLGITKDFLTFMKR). Residues 312–333 (LFCNPIYMLFILTSVLQVNGFI) traverse the membrane as a helical segment. Topologically, residues 334–353 (NKFTFLPKYLEQQYGKSTAE) are extracellular. The chain crosses the membrane as a helical span at residues 354 to 377 (AIFLIGVYSLPPICLGYLIGGFIM). The Cytoplasmic segment spans residues 378–381 (KKFK). The helical transmembrane segment at 382–405 (ITVKKAAYLAFCLSVFEYLLFLCH) threads the bilayer. Over 406–513 (FMLTCDNAAV…PECANRLQYF (108 aa)) the chain is Extracellular. A Kazal-like domain is found at 433–488 (SKVLADCNTRCSCSTNTWDPVCGDNGVAYMSACLAGCKKFVGTGTNMVFQDCSCIQ). Intrachain disulfides connect cysteine 439-cysteine 469, cysteine 445-cysteine 465, and cysteine 454-cysteine 486. N-linked (GlcNAc...) asparagine glycosylation occurs at asparagine 492. Residues 514 to 536 (LILTIIISFIYSLTAIPGYMVFL) traverse the membrane as a helical segment. Residues 537 to 545 (RCVKSEEKS) lie on the Cytoplasmic side of the membrane. A helical membrane pass occupies residues 546 to 571 (LGVGLHTFCIRVFAGIPAPVYFGALI). The Extracellular portion of the chain corresponds to 572–605 (DRTCLHWGTLKCGQRGACRMYDINSFRHIYLGLP). The chain crosses the membrane as a helical span at residues 606–623 (IALRGSSYLPAFFILILM). Topologically, residues 624-670 (RKFQFPGDIDSSATDHTEMMLGEKESEHTDVHGSPQVENDGELKTKL) are cytoplasmic. Residues serine 634 and serine 635 each carry the phosphoserine modification. Positions 645–654 (GEKESEHTDV) are enriched in basic and acidic residues. The disordered stretch occupies residues 645–670 (GEKESEHTDVHGSPQVENDGELKTKL).

Belongs to the organo anion transporter (TC 2.A.60) family. In terms of assembly, binds to PDZK1. Interaction with PDZK1 is required for expression on hepatocyte surface. Post-translationally, glycosylated. Highly expressed in liver and kidney, and at lower levels in brain, lung, skeletal muscle and proximal colon.

Its subcellular location is the basolateral cell membrane. It carries out the reaction estrone 3-sulfate(out) + hydrogencarbonate(in) = estrone 3-sulfate(in) + hydrogencarbonate(out). The enzyme catalyses taurocholate(out) + hydrogencarbonate(in) = taurocholate(in) + hydrogencarbonate(out). It catalyses the reaction L-thyroxine(out) = L-thyroxine(in). The catalysed reaction is prostaglandin E2(out) = prostaglandin E2(in). It carries out the reaction 17beta-estradiol 17-O-(beta-D-glucuronate)(out) = 17beta-estradiol 17-O-(beta-D-glucuronate)(in). The enzyme catalyses dehydroepiandrosterone 3-sulfate(out) = dehydroepiandrosterone 3-sulfate(in). In terms of biological role, mediates the Na(+)-independent transport of organic anions such as steroid sulfate conjugates (dehydroepiandrosterone sulfate (DHEAS), 17-beta-glucuronosyl estradiol, estrone-3-sulfate), conjugated (taurocholate) and unconjugated (cholate) bile acids, prostaglandin E2 (PGE2) and L-thyroxine T4. Also capable of transporting sulfobromophthalein (BSP), ouabain and gadoxetate. Hydrogencarbonate/HCO3(-) acts as the probable counteranion that exchanges for organic anions. Shows a pH-sensitive substrate specificity which may be ascribed to the protonation state of the binding site and leads to a stimulation of substrate transport in an acidic microenvironment. This is Solute carrier organic anion transporter family member 1A1 from Rattus norvegicus (Rat).